The chain runs to 362 residues: GTP 3',8-cyclase (362 aa).

One can recognise a Radical SAM core domain in the interval 8-228 (SLGRPLRDLR…ARISSHWPID (221 aa)). Residue Arg-17 participates in GTP binding. Residues Cys-24 and Cys-28 each contribute to the [4Fe-4S] cluster site. Position 30 (Tyr-30) interacts with S-adenosyl-L-methionine. Cys-31 serves as a coordination point for [4Fe-4S] cluster. Arg-71 is a GTP binding site. Gly-75 serves as a coordination point for S-adenosyl-L-methionine. A GTP-binding site is contributed by Thr-102. Position 126 (Ser-126) interacts with S-adenosyl-L-methionine. Lys-164 is a GTP binding site. Residue Met-198 coordinates S-adenosyl-L-methionine. Cys-262 and Cys-265 together coordinate [4Fe-4S] cluster. 267–269 (RLR) is a binding site for GTP. A [4Fe-4S] cluster-binding site is contributed by Cys-279. The tract at residues 325–362 (ALDSDGSREDADESEASAVPGRSTHPGHRKVEMSYIGG) is disordered.

The protein belongs to the radical SAM superfamily. MoaA family. Monomer and homodimer. It depends on [4Fe-4S] cluster as a cofactor.

The enzyme catalyses GTP + AH2 + S-adenosyl-L-methionine = (8S)-3',8-cyclo-7,8-dihydroguanosine 5'-triphosphate + 5'-deoxyadenosine + L-methionine + A + H(+). Its pathway is cofactor biosynthesis; molybdopterin biosynthesis. Its function is as follows. Catalyzes the cyclization of GTP to (8S)-3',8-cyclo-7,8-dihydroguanosine 5'-triphosphate. The protein is GTP 3',8-cyclase of Acidothermus cellulolyticus (strain ATCC 43068 / DSM 8971 / 11B).